We begin with the raw amino-acid sequence, 131 residues long: Large ribosomal subunit protein bL19 (131 aa).

The protein belongs to the bacterial ribosomal protein bL19 family.

Functionally, this protein is located at the 30S-50S ribosomal subunit interface and may play a role in the structure and function of the aminoacyl-tRNA binding site. The sequence is that of Large ribosomal subunit protein bL19 from Polynucleobacter necessarius subsp. necessarius (strain STIR1).